Reading from the N-terminus, the 256-residue chain is Probable septum site-determining protein MinC (256 aa).

The segment at 105–143 (RRGATAKPEPADEAEPPVAAAAAEAVPEPAPELAPSAPT) is disordered. Residues 120–142 (PPVAAAAAEAVPEPAPELAPSAP) show a composition bias toward low complexity.

It belongs to the MinC family. In terms of assembly, interacts with MinD and FtsZ.

Cell division inhibitor that blocks the formation of polar Z ring septums. Rapidly oscillates between the poles of the cell to destabilize FtsZ filaments that have formed before they mature into polar Z rings. Prevents FtsZ polymerization. This Burkholderia vietnamiensis (strain G4 / LMG 22486) (Burkholderia cepacia (strain R1808)) protein is Probable septum site-determining protein MinC.